Reading from the N-terminus, the 249-residue chain is Pleckstrin homology domain-containing family F member 2 (249 aa).

Position 16 is a phosphoserine (S16). A PH domain is found at V35–T131. K44 bears the N6-acetyllysine mark. The FYVE-type zinc finger occupies D152–S212. 8 residues coordinate Zn(2+): C158, C161, C175, C178, C183, C186, C204, and C207. The span at P221–S233 shows a compositional bias: polar residues. The interval P221 to D249 is disordered. A compositionally biased stretch (acidic residues) spans M238 to D249. 2 positions are modified to phosphoserine: S239 and S248.

In terms of assembly, may interact with EEA1. Expressed in placenta, ovary and small intestine, as well as in heart and pancreas. Also expressed in peripheral blood mononuclear cells and dendritic cells.

The protein localises to the early endosome membrane. It is found in the endoplasmic reticulum. Functionally, may play a role in early endosome fusion upstream of RAB5, hence regulating receptor trafficking and fluid-phase transport. Enhances cellular sensitivity to TNF-induced apoptosis. The polypeptide is Pleckstrin homology domain-containing family F member 2 (PLEKHF2) (Homo sapiens (Human)).